A 476-amino-acid polypeptide reads, in one-letter code: Glycogen synthase (476 aa).

Lysine 15 contributes to the ADP-alpha-D-glucose binding site.

This sequence belongs to the glycosyltransferase 1 family. Bacterial/plant glycogen synthase subfamily.

It carries out the reaction [(1-&gt;4)-alpha-D-glucosyl](n) + ADP-alpha-D-glucose = [(1-&gt;4)-alpha-D-glucosyl](n+1) + ADP + H(+). It participates in glycan biosynthesis; glycogen biosynthesis. In terms of biological role, synthesizes alpha-1,4-glucan chains using ADP-glucose. The sequence is that of Glycogen synthase from Leptospira biflexa serovar Patoc (strain Patoc 1 / Ames).